The primary structure comprises 539 residues: Glucans biosynthesis protein D (539 aa).

The tat-type signal signal peptide spans 1–29; the sequence is MNRRNLLKASMALAAYGSVSASGLFAARA.

Belongs to the OpgD/OpgG family. Post-translationally, predicted to be exported by the Tat system. The position of the signal peptide cleavage has not been experimentally proven.

It is found in the periplasm. It participates in glycan metabolism; osmoregulated periplasmic glucan (OPG) biosynthesis. Its function is as follows. Probably involved in the control of the structural glucose backbone of osmoregulated periplasmic glucans (OPGs). This Pseudomonas syringae pv. syringae (strain B728a) protein is Glucans biosynthesis protein D.